Here is a 348-residue protein sequence, read N- to C-terminus: Aldose 1-epimerase (348 aa).

Arg-80 provides a ligand contact to substrate. His-180 functions as the Proton donor in the catalytic mechanism. Residue Asp-243 participates in substrate binding. Glu-311 (proton acceptor) is an active-site residue.

This sequence belongs to the aldose epimerase family.

The catalysed reaction is alpha-D-glucose = beta-D-glucose. It functions in the pathway carbohydrate metabolism; hexose metabolism. In terms of biological role, mutarotase converts alpha-aldose to the beta-anomer. It is active on D-glucose, L-arabinose, D-xylose, D-galactose, maltose and lactose. The protein is Aldose 1-epimerase (galM) of Streptococcus thermophilus.